A 125-amino-acid polypeptide reads, in one-letter code: Large ribosomal subunit protein bL19 (125 aa).

It belongs to the bacterial ribosomal protein bL19 family.

This protein is located at the 30S-50S ribosomal subunit interface and may play a role in the structure and function of the aminoacyl-tRNA binding site. The chain is Large ribosomal subunit protein bL19 from Ehrlichia ruminantium (strain Gardel).